Here is a 471-residue protein sequence, read N- to C-terminus: Alpha-galactosidase 2 (471 aa).

Residues 1-18 form the signal peptide; the sequence is MFAFYFLTACISLKGVFG. An intrachain disulfide couples C42 to C74. Substrate is bound by residues D72 and D73. The N-linked (GlcNAc...) asparagine glycan is linked to N105. A disulfide bond links C121 and C151. K147 serves as a coordination point for substrate. D149 acts as the Nucleophile in catalysis. N-linked (GlcNAc...) asparagine glycosylation is present at N175. R205 provides a ligand contact to substrate. Catalysis depends on D209, which acts as the Proton donor. Intrachain disulfides connect C221/C237 and C223/C230. Residue Q251 participates in substrate binding. 7 N-linked (GlcNAc...) asparagine glycosylation sites follow: N270, N370, N403, N413, N422, N435, and N454.

The protein belongs to the glycosyl hydrolase 27 family. Homotetramer.

The protein resides in the secreted. It carries out the reaction Hydrolysis of terminal, non-reducing alpha-D-galactose residues in alpha-D-galactosides, including galactose oligosaccharides, galactomannans and galactolipids.. In Saccharomyces cerevisiae (Baker's yeast), this protein is Alpha-galactosidase 2 (MEL2).